The primary structure comprises 169 residues: Putative lipocalin R877 (169 aa).

A signal peptide spans 1–18 (MWIIILIVIIVIITIIFS).

The protein belongs to the calycin superfamily. Lipocalin family.

The protein resides in the secreted. It is found in the virion. Could play a role in the transport of a small ligand. This Acanthamoeba polyphaga mimivirus (APMV) protein is Putative lipocalin R877.